The following is an 88-amino-acid chain: UPF0367 protein Tery_1229 (88 aa).

The protein belongs to the UPF0367 family.

The protein is UPF0367 protein Tery_1229 of Trichodesmium erythraeum (strain IMS101).